The sequence spans 441 residues: Divalent metal cation transporter MntH (441 aa).

Helical transmembrane passes span 41–61 (TGIA…IGYM), 74–94 (AAYG…AMLF), 116–136 (HFPA…AMAT), 141–161 (FLGG…AGMI), 183–203 (AAIA…LMIA), 223–243 (AALT…TLYL), 271–291 (VVVA…MAAS), 311–331 (IPVL…TSGV), 360–380 (AVTI…TRAM), 381–401 (VASQ…LLIL), and 419–439 (IVAG…VWAA).

It belongs to the NRAMP family.

The protein resides in the cell inner membrane. Functionally, h(+)-stimulated, divalent metal cation uptake system. In Burkholderia ambifaria (strain ATCC BAA-244 / DSM 16087 / CCUG 44356 / LMG 19182 / AMMD) (Burkholderia cepacia (strain AMMD)), this protein is Divalent metal cation transporter MntH.